A 48-amino-acid polypeptide reads, in one-letter code: U1-theraphotoxin-Agm1a (48 aa).

Disulfide bonds link C4-C34, C8-C40, and C22-C45. M44 is subject to Methionine sulfoxide; partial.

The protein belongs to the neurotoxin 12 (Hwtx-2) family. 01 (Ap1a) subfamily. In terms of tissue distribution, expressed by the venom gland.

It is found in the secreted. In terms of biological role, is toxic to both insects and mammals. Induces reversible paralysis when injected into S.frugiperda larvae. Reduces both the amplitude and frequency of responses from muscle (GF-TTM and GF-DLM) pathways in the D.melanogaster giant fiber circuit, suggesting an action at the neuromuscular junction, which is mediated by glutamatergic receptors. In mice, intracranial injection of 30 ug causes increased urination, myoclonus, hypermotility with circular movements followed by respiratory and generalized seizures resulting in death within 25-35 minutes of injection. The chain is U1-theraphotoxin-Agm1a from Acanthoscurria gomesiana (Tarantula spider).